The sequence spans 228 residues: L-ribulose-5-phosphate 4-epimerase UlaF (228 aa).

Residues 26-27 (GN), 43-44 (SG), and 72-73 (SS) each bind substrate. Positions 74, 93, and 95 each coordinate Zn(2+). Asp118 (proton donor/acceptor) is an active-site residue. Residue His167 coordinates Zn(2+). Tyr225 acts as the Proton donor/acceptor in catalysis.

Belongs to the aldolase class II family. AraD/FucA subfamily. It depends on Zn(2+) as a cofactor.

The enzyme catalyses L-ribulose 5-phosphate = D-xylulose 5-phosphate. The protein operates within cofactor degradation; L-ascorbate degradation; D-xylulose 5-phosphate from L-ascorbate: step 4/4. Catalyzes the isomerization of L-ribulose 5-phosphate to D-xylulose 5-phosphate. Is involved in the anaerobic L-ascorbate utilization. The sequence is that of L-ribulose-5-phosphate 4-epimerase UlaF from Shigella boydii serotype 18 (strain CDC 3083-94 / BS512).